Reading from the N-terminus, the 321-residue chain is Cytochrome f (321 aa).

An N-terminal signal peptide occupies residues 1–37 (MKIYRQIKQSFSITKIVFSFFISLLLNLVAQPTICQA). Heme is bound by residues F38, C58, C61, and H62. Residues 287–306 (VQGLIAFFISVVLAQIFLVL) traverse the membrane as a helical segment.

The protein belongs to the cytochrome f family. The 4 large subunits of the cytochrome b6-f complex are cytochrome b6, subunit IV (17 kDa polypeptide, petD), cytochrome f and the Rieske protein, while the 4 small subunits are PetG, PetL, PetM and PetN. The complex functions as a dimer. Requires heme as cofactor.

The protein localises to the plastid. It localises to the cyanelle thylakoid membrane. Functionally, component of the cytochrome b6-f complex, which mediates electron transfer between photosystem II (PSII) and photosystem I (PSI), cyclic electron flow around PSI, and state transitions. The sequence is that of Cytochrome f (petA) from Cyanophora paradoxa.